Reading from the N-terminus, the 635-residue chain is Glutamine sensor PIB2 (635 aa).

The disordered stretch occupies residues 1–110 (MTALHSVSKT…GTGFVDRKQQ (110 aa)). The interval 1–164 (MTALHSVSKT…KTLPFTDDQR (164 aa)) is may play a role in attenuating TORC1 signaling. A compositionally biased stretch (basic and acidic residues) spans 33-44 (RNHDYRGRKGDE). A phosphoserine mark is found at Ser46 and Ser53. A Phosphothreonine modification is found at Thr56. Over residues 67–85 (STHSEQSILSSISLKSMVN) the composition is skewed to polar residues. Phosphoserine occurs at positions 73, 113, 124, 148, 165, and 174. Disordered regions lie at residues 123-181 (NSAE…VSRG) and 224-254 (SSNL…TSKV). The segment covering 238–254 (SSSSSTSSVSSSSTSKV) has biased composition (low complexity). Residues Ser300, Ser309, and Ser381 each carry the phosphoserine modification. The segment at 304–440 (LPQPASSTNL…PTISNRNSAR (137 aa)) is required for interaction with TORC1. Residues 452–527 (DSKRNSCRYC…ICDDCLVEYE (76 aa)) form an FYVE-type; atypical zinc finger. The Zn(2+) site is built by Cys458, Cys461, Cys474, Cys477, Cys482, His485, Cys519, and Cys522. Disordered stretches follow at residues 534-557 (HNAN…DNRK) and 570-623 (ALFR…GSVI). 2 stretches are compositionally biased toward acidic residues: residues 543 to 553 (INVEEGEDDDN) and 601 to 616 (EEAD…EEGN). The segment at 620–635 (GSVIGSVPANWNWSSF) is may be required for TORC1 activation.

As to quaternary structure, interacts with the TORC1 complex when activated by glutamine or cysteine. Interacts with TOR1; glutamine enhances the interaction. Interacts with KOG1; glutamine enhances the interaction. Interacts with TCO89. Interacts with LST8; glutamine enhances the interaction. Interacts with TOR2; glutamine enhances the interaction.

It is found in the vacuole membrane. Its activity is regulated as follows. Activated by glutamine. May also be activated by cysteine. Functions as an intracellular glutamine sensor that directly activates the TORC1 signaling pathway, to promote cell growth when glutamine is available. May play a role in repressing NPR1 activity independently of TORC1 signaling. This chain is Glutamine sensor PIB2, found in Saccharomyces cerevisiae (strain ATCC 204508 / S288c) (Baker's yeast).